A 246-amino-acid chain; its full sequence is Small ribosomal subunit protein uS2 (246 aa).

It belongs to the universal ribosomal protein uS2 family.

This Saccharophagus degradans (strain 2-40 / ATCC 43961 / DSM 17024) protein is Small ribosomal subunit protein uS2.